The primary structure comprises 393 residues: Pinosylvin synthase (393 aa).

57–60 (KFKR) serves as a coordination point for substrate. C167 is an active-site residue. Substrate is bound by residues L270 and 308-310 (GGR).

The protein belongs to the thiolase-like superfamily. Chalcone/stilbene synthases family. As to quaternary structure, homodimer.

It is found in the cytoplasm. It catalyses the reaction (E)-cinnamoyl-CoA + 3 malonyl-CoA + 3 H(+) = (E)-pinosylvin + 4 CO2 + 4 CoA. It carries out the reaction 3-phenylpropanoyl-CoA + 3 malonyl-CoA + 3 H(+) = dihydropinosylvin + 4 CO2 + 4 CoA. The protein operates within phytoalexin biosynthesis; hydropinosylvin biosynthesis. Functionally, catalyzes the production of pinosylvin from cinnamoyl-CoA and malonyl-CoA, and dihydropinosylvin from dihydrocinnamoyl-CoA. This Pinus sylvestris (Scotch pine) protein is Pinosylvin synthase.